Here is a 1094-residue protein sequence, read N- to C-terminus: Carbamoyl phosphate synthase large chain (1094 aa).

Residues M1–E402 are carboxyphosphate synthetic domain. Positions 129, 169, 175, 176, 208, 210, 215, 241, 242, 243, 285, and 299 each coordinate ATP. In terms of domain architecture, ATP-grasp 1 spans G133–V328. Q285, E299, and N301 together coordinate Mg(2+). Positions 285, 299, and 301 each coordinate Mn(2+). Positions T403–S552 are oligomerization domain. Residues E553–D936 form a carbamoyl phosphate synthetic domain region. The ATP-grasp 2 domain maps to E679 to L870. Residues R715, R754, L756, E761, G786, I787, H788, S789, Q829, and E841 each contribute to the ATP site. Positions 829, 841, and 843 each coordinate Mg(2+). Positions 829, 841, and 843 each coordinate Mn(2+). The MGS-like domain maps to N937–P1077. Residues N937–A1094 are allosteric domain.

This sequence belongs to the CarB family. Composed of two chains; the small (or glutamine) chain promotes the hydrolysis of glutamine to ammonia, which is used by the large (or ammonia) chain to synthesize carbamoyl phosphate. Tetramer of heterodimers (alpha,beta)4. Mg(2+) is required as a cofactor. It depends on Mn(2+) as a cofactor.

It catalyses the reaction hydrogencarbonate + L-glutamine + 2 ATP + H2O = carbamoyl phosphate + L-glutamate + 2 ADP + phosphate + 2 H(+). It carries out the reaction hydrogencarbonate + NH4(+) + 2 ATP = carbamoyl phosphate + 2 ADP + phosphate + 2 H(+). The protein operates within amino-acid biosynthesis; L-arginine biosynthesis; carbamoyl phosphate from bicarbonate: step 1/1. It participates in pyrimidine metabolism; UMP biosynthesis via de novo pathway; (S)-dihydroorotate from bicarbonate: step 1/3. Functionally, large subunit of the glutamine-dependent carbamoyl phosphate synthetase (CPSase). CPSase catalyzes the formation of carbamoyl phosphate from the ammonia moiety of glutamine, carbonate, and phosphate donated by ATP, constituting the first step of 2 biosynthetic pathways, one leading to arginine and/or urea and the other to pyrimidine nucleotides. The large subunit (synthetase) binds the substrates ammonia (free or transferred from glutamine from the small subunit), hydrogencarbonate and ATP and carries out an ATP-coupled ligase reaction, activating hydrogencarbonate by forming carboxy phosphate which reacts with ammonia to form carbamoyl phosphate. The chain is Carbamoyl phosphate synthase large chain from Gemmatimonas aurantiaca (strain DSM 14586 / JCM 11422 / NBRC 100505 / T-27).